The primary structure comprises 600 residues: Proline dehydrogenase 1, mitochondrial (600 aa).

Residues 155–177 (AEHKEMESCTSAAERDGSGTNKR) are disordered. An N6-acetyllysine mark is found at Lys368 and Lys486.

This sequence belongs to the proline oxidase family. The cofactor is FAD. Expressed in lung, skeletal muscle and brain, to a lesser extent in heart and kidney, and weakly in liver, placenta and pancreas.

It is found in the mitochondrion matrix. The catalysed reaction is L-proline + a quinone = (S)-1-pyrroline-5-carboxylate + a quinol + H(+). The protein operates within amino-acid degradation; L-proline degradation into L-glutamate; L-glutamate from L-proline: step 1/2. Its function is as follows. Converts proline to delta-1-pyrroline-5-carboxylate. The protein is Proline dehydrogenase 1, mitochondrial of Homo sapiens (Human).